Reading from the N-terminus, the 189-residue chain is Parkinson disease protein 7 homolog (189 aa).

Position 2 is an N-acetylalanine; in Protein/nucleic acid deglycase DJ-1, N-terminally processed (A2). S-palmitoyl cysteine attachment occurs at residues C46 and C53. A Phosphotyrosine modification is found at Y67. The active-site Nucleophile is C106. C106 carries the cysteine sulfinic acid (-SO2H); alternate modification. C106 carries the S-palmitoyl cysteine; alternate lipid modification. H126 is an active-site residue. A Glycyl lysine isopeptide (Lys-Gly) (interchain with G-Cter in SUMO) cross-link involves residue K130. The residue at position 148 (K148) is an N6-acetyllysine. Position 182 is an N6-succinyllysine (K182).

This sequence belongs to the peptidase C56 family. Homodimer. Binds EFCAB6/DJBP and PIAS2. Part of a ternary complex containing PARK7, EFCAB6/DJBP and AR. Interacts (via N-terminus) with OTUD7B. Interacts with BBS1, HIPK1, CLCF1 and MTERF. Forms a complex with PINK1 and PRKN. Interacts (via C-terminus) with NCF1; the interaction is enhanced by LPS and modulates NCF1 phosphorylation and membrane translocation. Interacts with NENF. It depends on Deglycase activity does not require glutathione as a cofactor, however, glycated glutathione constitutes a PARK7 substrate. as a cofactor. In terms of processing, sumoylated on Lys-130 by PIAS2 or PIAS4; which is essential for cell-growth promoting activity and transforming activity. Post-translationally, undergoes cleavage of a C-terminal peptide and subsequent activation of protease activity in response to oxidative stress. Detected in liver, heart, spleen and testis (at protein level). Detected in liver, heart, spleen, kidney, epididymidis, vas deferens, sperm cells and testis.

It is found in the cell membrane. Its subcellular location is the cytoplasm. The protein resides in the nucleus. It localises to the membrane raft. The protein localises to the mitochondrion. It is found in the endoplasmic reticulum. The enzyme catalyses N(omega)-(1-hydroxy-2-oxopropyl)-L-arginyl-[protein] + H2O = lactate + L-arginyl-[protein] + H(+). It catalyses the reaction N(6)-(1-hydroxy-2-oxopropyl)-L-lysyl-[protein] + H2O = lactate + L-lysyl-[protein] + H(+). It carries out the reaction S-(1-hydroxy-2-oxopropyl)-L-cysteinyl-[protein] + H2O = lactate + L-cysteinyl-[protein] + H(+). The catalysed reaction is N(omega)-(1-hydroxy-2-oxoethyl)-L-arginyl-[protein] + H2O = L-arginyl-[protein] + glycolate + H(+). The enzyme catalyses N(6)-(1-hydroxy-2-oxoethyl)-L-lysyl-[protein] + H2O = glycolate + L-lysyl-[protein] + H(+). It catalyses the reaction S-(1-hydroxy-2-oxoethyl)-L-cysteinyl-[protein] + H2O = glycolate + L-cysteinyl-[protein] + H(+). It carries out the reaction N(2)-(1-hydroxy-2-oxopropyl)-dGTP + H2O = lactate + dGTP + H(+). The catalysed reaction is N(2)-(1-hydroxy-2-oxopropyl)-GTP + H2O = lactate + GTP + H(+). The enzyme catalyses N(2)-(1-hydroxy-2-oxopropyl)-GDP + H2O = lactate + GDP + H(+). It catalyses the reaction N(2)-(1-hydroxy-2-oxopropyl)-GMP + H2O = lactate + GMP + H(+). It carries out the reaction N(2)-(1-hydroxy-2-oxoethyl)-dGTP + H2O = dGTP + glycolate + H(+). The catalysed reaction is N(2)-(1-hydroxy-2-oxoethyl)-GTP + H2O = glycolate + GTP + H(+). The enzyme catalyses N(2)-(1-hydroxy-2-oxoethyl)-GDP + H2O = glycolate + GDP + H(+). It catalyses the reaction N(2)-(1-hydroxy-2-oxoethyl)-GMP + H2O = glycolate + GMP + H(+). It carries out the reaction an N(2)-(1-hydroxy-2-oxopropyl)-guanosine in RNA + H2O = a guanosine in RNA + lactate + H(+). The catalysed reaction is an N(2)-(1-hydroxy-2-oxopropyl)-2'-deoxyguanosine in DNA + H2O = a 2'-deoxyguanosine in DNA + lactate + H(+). The enzyme catalyses an N(2)-(1-hydroxy-2-oxoethyl)-guanosine in RNA + H2O = a guanosine in RNA + glycolate + H(+). It catalyses the reaction an N(2)-(1-hydroxy-2-oxoethyl)-2'-deoxyguanosine in DNA + H2O = a 2'-deoxyguanosine in DNA + glycolate + H(+). In terms of biological role, multifunctional protein with controversial molecular function which plays an important role in cell protection against oxidative stress and cell death acting as oxidative stress sensor and redox-sensitive chaperone and protease. It is involved in neuroprotective mechanisms like the stabilization of NFE2L2 and PINK1 proteins, male fertility as a positive regulator of androgen signaling pathway as well as cell growth and transformation through, for instance, the modulation of NF-kappa-B signaling pathway. Has been described as a protein and nucleotide deglycase that catalyzes the deglycation of the Maillard adducts formed between amino groups of proteins or nucleotides and reactive carbonyl groups of glyoxals. But this function is rebuted by other works. As a protein deglycase, repairs methylglyoxal- and glyoxal-glycated proteins, and releases repaired proteins and lactate or glycolate, respectively. Deglycates cysteine, arginine and lysine residues in proteins, and thus reactivates these proteins by reversing glycation by glyoxals. Acts on early glycation intermediates (hemithioacetals and aminocarbinols), preventing the formation of advanced glycation endproducts (AGE) that cause irreversible damage. Also functions as a nucleotide deglycase able to repair glycated guanine in the free nucleotide pool (GTP, GDP, GMP, dGTP) and in DNA and RNA. Is thus involved in a major nucleotide repair system named guanine glycation repair (GG repair), dedicated to reversing methylglyoxal and glyoxal damage via nucleotide sanitization and direct nucleic acid repair. Protects histones from adduction by methylglyoxal, controls the levels of methylglyoxal-derived argininine modifications on chromatin. Able to remove the glycations and restore histone 3, histone glycation disrupts both local and global chromatin architecture by altering histone-DNA interactions as well as histone acetylation and ubiquitination levels. Displays a very low glyoxalase activity that may reflect its deglycase activity. Eliminates hydrogen peroxide and protects cells against hydrogen peroxide-induced cell death. Required for correct mitochondrial morphology and function as well as for autophagy of dysfunctional mitochondria. Plays a role in regulating expression or stability of the mitochondrial uncoupling proteins SLC25A14 and SLC25A27 in dopaminergic neurons of the substantia nigra pars compacta and attenuates the oxidative stress induced by calcium entry into the neurons via L-type channels during pacemaking. Regulates astrocyte inflammatory responses, may modulate lipid rafts-dependent endocytosis in astrocytes and neuronal cells. In pancreatic islets, involved in the maintenance of mitochondrial reactive oxygen species (ROS) levels and glucose homeostasis in an age- and diet dependent manner. Protects pancreatic beta cells from cell death induced by inflammatory and cytotoxic setting. Binds to a number of mRNAs containing multiple copies of GG or CC motifs and partially inhibits their translation but dissociates following oxidative stress. Metal-binding protein able to bind copper as well as toxic mercury ions, enhances the cell protection mechanism against induced metal toxicity. In macrophages, interacts with the NADPH oxidase subunit NCF1 to direct NADPH oxidase-dependent ROS production, and protects against sepsis. In Mesocricetus auratus (Golden hamster), this protein is Parkinson disease protein 7 homolog (PARK7).